The sequence spans 424 residues: Glutamate-1-semialdehyde 2,1-aminomutase (424 aa).

An N6-(pyridoxal phosphate)lysine modification is found at K268.

This sequence belongs to the class-III pyridoxal-phosphate-dependent aminotransferase family. HemL subfamily. Pyridoxal 5'-phosphate serves as cofactor.

It is found in the cytoplasm. The enzyme catalyses (S)-4-amino-5-oxopentanoate = 5-aminolevulinate. Its pathway is porphyrin-containing compound metabolism; protoporphyrin-IX biosynthesis; 5-aminolevulinate from L-glutamyl-tRNA(Glu): step 2/2. This chain is Glutamate-1-semialdehyde 2,1-aminomutase, found in Methanosarcina acetivorans (strain ATCC 35395 / DSM 2834 / JCM 12185 / C2A).